The following is a 452-amino-acid chain: Phosphoglucosamine mutase (452 aa).

Catalysis depends on Ser-101, which acts as the Phosphoserine intermediate. Ser-101, Asp-241, Asp-243, and Asp-245 together coordinate Mg(2+). Ser-101 is subject to Phosphoserine.

Belongs to the phosphohexose mutase family. Requires Mg(2+) as cofactor. In terms of processing, activated by phosphorylation.

It catalyses the reaction alpha-D-glucosamine 1-phosphate = D-glucosamine 6-phosphate. Its function is as follows. Catalyzes the conversion of glucosamine-6-phosphate to glucosamine-1-phosphate. This chain is Phosphoglucosamine mutase, found in Lactococcus lactis subsp. cremoris (strain MG1363).